A 619-amino-acid chain; its full sequence is MKTNSSFHAAGEVATQPAWGTGEQAAQPLNGSTSRFAMSESSLADLLQKAASQYPNRAAYKFIDYDTDPAGFTETVTWWQVHRRAMIVAEELWIYASSGDRVAILAPQGLEYIIAFMGVLQAGLIAVPLPVPQFGIHDERISSALRDSAPSIILTTSSVIDEVTTYAPHACAAQGQSAPIVVAVDALDLSSSRALDPTRFERPSTAYLQYTSGSTRAPAGVVLSHKNVITNCVQLMSDYIGDSEKVPSTPVSWLPFYHDMGLMLGIILPMINQDTAVLMSPMAFLQRPARWMQLLAKHRAQISSAPNFGFELAVRRTSDDDMAGLDLGHVRTIVTGAERVNVATLRRFTERFAPFNLSETAIRPSYGLAEATVYVATAGPGRAPKSVCFDYQQLSVGQAKRAENGSEGANLVSYGAPRASTVRIVDPETRMENPAGTVGEIWVQGDNVGLGYWRNPQQTEATFRARLVTPSPGTSEGPWLRTGDLGVIFEGELFITGRIKELLVVDGANHYPEDIEATIQEITGGRVVAIAVPDDRTEKLVTIIELMKRGRTDEEEKNRLRTVKREVASAISRSHRLRVADVVMVAPGSIPVTTSGKVRRSASVERYLHHEFSRLDAMA.

This sequence belongs to the ATP-dependent AMP-binding enzyme family.

The catalysed reaction is 17-(4-hydroxyphenyl)heptadecanoate + holo-[(phenol)carboxyphthiodiolenone synthase] + ATP = 17-(4-hydroxyphenyl)heptadecanoyl-[(phenol)carboxyphthiodiolenone synthase] + AMP + diphosphate. It catalyses the reaction 19-(4-hydroxyphenyl)nonadecanoate + holo-[(phenol)carboxyphthiodiolenone synthase] + ATP = 19-(4-hydroxyphenyl)nonadecanoyl-[(phenol)carboxyphthiodiolenone synthase] + AMP + diphosphate. It carries out the reaction dodecanoate + ATP + H(+) = dodecanoyl-AMP + diphosphate. Its pathway is lipid metabolism; fatty acid biosynthesis. Functionally, catalyzes the activation of long-chain fatty acids as acyl-adenylates (acyl-AMP), which are then transferred to the multifunctional polyketide synthase PpsA for further chain extension. Involved in the biosynthesis of phenolphthiocerol, which is an important intermediate in the biosynthesis of phenolic glycolipid (PGL), also called mycosid B. This Mycobacterium tuberculosis (strain ATCC 25618 / H37Rv) protein is 4-hydroxyphenylalkanoate adenylyltransferase (fadD29).